The sequence spans 304 residues: Putative integrase/recombinase HI_1414 (304 aa).

The region spanning T30 to L109 is the Core-binding (CB) domain. The Tyr recombinase domain maps to P131 to D304. Active-site residues include R174, K199, H256, R259, and H281. Y291 serves as the catalytic O-(3'-phospho-DNA)-tyrosine intermediate.

This sequence belongs to the 'phage' integrase family.

The sequence is that of Putative integrase/recombinase HI_1414 from Haemophilus influenzae (strain ATCC 51907 / DSM 11121 / KW20 / Rd).